A 287-amino-acid polypeptide reads, in one-letter code: L-ascorbate peroxidase 3 (287 aa).

At A2 the chain carries N-acetylalanine. Residue H40 is the Proton acceptor of the active site. The disordered stretch occupies residues 46–66 (DAQSKTGGPNGSIRNEEEHTH). H160 is a heme b binding site. K(+) is bound by residues T161, T177, and D184. Residues 259–279 (ILAQSAFGVAVAAAVVAFGYF) form a helical membrane-spanning segment. The short motif at 281 to 287 (EIRKRMK) is the AKR2A-binding sequence (ABS) required for peroxisome membrane targeting element.

Belongs to the peroxidase family. Ascorbate peroxidase subfamily. In terms of assembly, interacts via its C-terminal region with AKR2A and AKR2B. Requires heme b as cofactor.

The protein localises to the peroxisome membrane. It localises to the glyoxysome membrane. It catalyses the reaction L-ascorbate + H2O2 = L-dehydroascorbate + 2 H2O. Plays a key role in hydrogen peroxide removal. In Arabidopsis thaliana (Mouse-ear cress), this protein is L-ascorbate peroxidase 3 (APX3).